A 342-amino-acid chain; its full sequence is S-adenosylmethionine:tRNA ribosyltransferase-isomerase (342 aa).

This sequence belongs to the QueA family. In terms of assembly, monomer.

The protein localises to the cytoplasm. The enzyme catalyses 7-aminomethyl-7-carbaguanosine(34) in tRNA + S-adenosyl-L-methionine = epoxyqueuosine(34) in tRNA + adenine + L-methionine + 2 H(+). The protein operates within tRNA modification; tRNA-queuosine biosynthesis. In terms of biological role, transfers and isomerizes the ribose moiety from AdoMet to the 7-aminomethyl group of 7-deazaguanine (preQ1-tRNA) to give epoxyqueuosine (oQ-tRNA). The sequence is that of S-adenosylmethionine:tRNA ribosyltransferase-isomerase from Streptococcus agalactiae serotype V (strain ATCC BAA-611 / 2603 V/R).